A 230-amino-acid chain; its full sequence is MSERAPVVTIDGPSGAGKGTISQLLAKHLGWQLLDSGAIYRVLALAAIHHDVELENEESITLLAAHLDVKFLTGNEKDPVQVILEGEDVTTAIRTQECSNAASKVAAFPRVREALLRRQRAFRAAPGLIADGRDMGTVVFPTASAKLYLTASAEERAQRRYNQLQDKGFDVNIERLLAEIIERDDRDMNRPVAPLVPAEDALVIDTSDKGIDEVLELALNYINQKLSIAN.

12-20 (GPSGAGKGT) lines the ATP pocket.

It belongs to the cytidylate kinase family. Type 1 subfamily.

The protein localises to the cytoplasm. The catalysed reaction is CMP + ATP = CDP + ADP. It carries out the reaction dCMP + ATP = dCDP + ADP. This chain is Cytidylate kinase, found in Shewanella sp. (strain MR-7).